A 402-amino-acid polypeptide reads, in one-letter code: Deacetylase Oant_2987 (402 aa).

6 residues coordinate Zn(2+): H70, H72, K168, H201, H224, and D284. The residue at position 168 (K168) is an N6-carboxylysine.

This sequence belongs to the metallo-dependent hydrolases superfamily. Atu3266/EF_0837 deacetylase family. Requires Zn(2+) as cofactor.

In terms of biological role, esterase that catalyzes the deacetylation of acetyl-(R)-mandelate (in vitro). Can also hydrolyze acetyl glycolate, but with lower efficiency. Has very low N-acetyl-D-amino acid deacetylase activity with N-acetyl-D-serine and N-acetyl-D-threonine (in vitro). Theoretical substrate docking studies suggest that other N-acetylated amino acids may optimally occupy the active site and may in fact be the physiological substrates. This chain is Deacetylase Oant_2987, found in Brucella anthropi (strain ATCC 49188 / DSM 6882 / CCUG 24695 / JCM 21032 / LMG 3331 / NBRC 15819 / NCTC 12168 / Alc 37) (Ochrobactrum anthropi).